The sequence spans 3103 residues: Extracellular matrix protein 3 (3103 aa).

Residues 1–19 (MASALLCFLAAILPGMIAA) form the signal peptide. Topologically, residues 20–3047 (QNTWVLGTSD…TYELAPKGTN (3028 aa)) are extracellular. CSPG repeat units lie at residues 289-388 (PPSL…LEIV), 411-499 (APVV…FRMT), 520-630 (APIV…FRVV), 656-762 (PPEM…FVVQ), 784-875 (QPPT…LEIT), 901-993 (LPPG…LTLS), 1022-1124 (APNV…FRCT), 1145-1238 (EEPQ…VLLT), 1259-1357 (TPRL…FDIT), 1378-1470 (VHPS…FQVT), 1490-1579 (KEPV…FIVT), and 1613-1710 (APQI…VEVR). 2 N-linked (GlcNAc...) asparagine glycosylation sites follow: asparagine 330 and asparagine 453. Residues asparagine 989, asparagine 1024, asparagine 1042, asparagine 1207, asparagine 1294, asparagine 1321, and asparagine 1327 are each glycosylated (N-linked (GlcNAc...) asparagine). Residues asparagine 1542, asparagine 1674, asparagine 1679, asparagine 1725, and asparagine 1739 are each glycosylated (N-linked (GlcNAc...) asparagine). 4 Calx-beta domains span residues 1717 to 1816 (LPNQ…IILH), 1829 to 1942 (AVVT…VKLS), 1956 to 2062 (NVII…LVLN), and 2077 to 2179 (ITIN…LVLG). N-linked (GlcNAc...) asparagine glycosylation is found at asparagine 2080, asparagine 2195, asparagine 2274, asparagine 2385, and asparagine 2932. Residues 2197-2302 (TVVTVHDVGD…MREAFTLHIT (106 aa)) form the Calx-beta 5 domain. The interval 2983 to 3013 (SSGIGKRETEHHAISSRQRRQANSEALVDPA) is disordered. The helical transmembrane segment at 3048 to 3068 (VVMIAVVIGVILIILLVALVI) threads the bilayer. The Cytoplasmic portion of the chain corresponds to 3069–3103 (GVVVRRRQAKQQPVVVVNGSAKVVSNVHFDDNTEV).

Belongs to the FRAS1 family. Component of extracellular matrix fibers that interact with PMC filopodia during gastrulation (at protein level).

Its subcellular location is the cell membrane. Its function is as follows. Extracellular matrix protein that may serve as substrate for the migratory primary mesenchyme cells (PMCs), the interaction possibly providing guidance information to migrating PMCs. In Lytechinus variegatus (Green sea urchin), this protein is Extracellular matrix protein 3 (ECM3).